The chain runs to 861 residues: Linoleate 9S-lipoxygenase 2 (861 aa).

A PLAT domain is found at 29–160 (NALDFTDLAG…RYKSDRIFFV (132 aa)). In terms of domain architecture, Lipoxygenase spans 163 to 861 (PYLPSKTPEL…GKGIPNSVSI (699 aa)). The disordered stretch occupies residues 212 to 246 (EGKENVRTTLGGSAEYPYPRRGRTGRPPTRTDPKS). 5 residues coordinate Fe cation: histidine 522, histidine 527, histidine 713, asparagine 717, and isoleucine 861.

The protein belongs to the lipoxygenase family. In terms of assembly, monomer. Requires Fe cation as cofactor. As to expression, highly expressed in tubers and roots. Detected in flower buds and leaves.

It localises to the cytoplasm. The catalysed reaction is (9Z,12Z)-octadecadienoate + O2 = (9S)-hydroperoxy-(10E,12Z)-octadecadienoate. Its pathway is lipid metabolism; oxylipin biosynthesis. Plant lipoxygenases may be involved in a number of diverse aspects of plant physiology including growth and development, pest resistance, and senescence or responses to wounding. Catalyzes the hydroperoxidation of lipids containing a cis,cis-1,4-pentadiene structure. Linoleic acid is the preferred substrate, but is also active with linolenic and arachidonic acids. This Solanum tuberosum (Potato) protein is Linoleate 9S-lipoxygenase 2 (LOX1.2).